The following is a 638-amino-acid chain: DNA mismatch repair protein MutL (638 aa).

Residues 404–433 (FGTQTNAFGSMATPRDNSRGNYSAGESRQR) form a disordered region.

This sequence belongs to the DNA mismatch repair MutL/HexB family.

Its function is as follows. This protein is involved in the repair of mismatches in DNA. It is required for dam-dependent methyl-directed DNA mismatch repair. May act as a 'molecular matchmaker', a protein that promotes the formation of a stable complex between two or more DNA-binding proteins in an ATP-dependent manner without itself being part of a final effector complex. The protein is DNA mismatch repair protein MutL of Shewanella baltica (strain OS195).